A 976-amino-acid polypeptide reads, in one-letter code: MDRVCWIMALSWFWMVSTGLVSAEEEVLMNTKLETSDLRWTIYPSGDPEWEEMSGLDEEGNSVRTFQVCPMDSSVSHWLRTRFIPRHGASQVYVEIRFTMMECSAMPASFRTCKETFNLYYYQSDEDTASATHPAWMENPYSKVDTVAADFLLRRGGERKSNVKTVRVGPLSKKGFYLAFQTQGACMALLSVRVFFKKCPAVSRAFSSFPETLPHSLVQQAEGVCVDNSAPTGQSTAPPTMFCGEDGQWVGPPSSTCACKPGYEPVDSDRCRACGLGQYKASVGGSLCRVCPDNSNTHFAGSSLCVCRPGYHRATSDLPDSACTKPPSAPRSIIYQINDTVVTLEWSEPLDRGGRSDLSYSVECMHCRGSLCVQCADSITYRPGQMGVPGRRVIIRGLLPHTTYTFTVLAQNGVSAVSHTSPASSSVNITTSRDVAVPVSGIRRIKASESSVSISWTVPPQTQHSIQDYQLRYSLKGQDDGWQYVSSRSSSVVLNDLSRASQYQVQVRARTAAGYGHFSSAVSISTLPDDEESPSRLMLTGVLVAIGLLILIAVVIVAVFCFRRSTRRRDPDPDKSGQFLMGQGIKVYIDPFTYEDPNEAVREFAKEIDVSFVKIEEVIGAGEFGEVCRGRLKVPGKKENYVAIKTLKGGYTDKQRRDFLSEASIMGQFQHPNIIHLEGVITASCPVMILTEYMENGALDSFLRLNDGQFTPIQLVGMLRGIASGMKYLSEMSFVHRDLAARNILVNSNLVCKVSDFGLSRFLTENSSDPTYTSSLGGKIPIRWTAPEAIAFRKFTSASDVWSYGIVMWEVMSFGERPYWDMSNQDVINAIEQDYRLPPPPECPASLHQLMLDCWQKERSSRPRFCAIVSALDRLIRNPASLKITGRIPDGPSHPLLDQRAPPPLSHCSSVADWLRAIKMERYEDAFMQAGFTAIQHITHISTEDLLRIGVTLAGHQKKILSSVQTLRIHGGSLRY.

An N-terminal signal peptide occupies residues 1-23 (MDRVCWIMALSWFWMVSTGLVSA). The Extracellular segment spans residues 24–541 (EEEVLMNTKL…ESPSRLMLTG (518 aa)). The Eph LBD domain occupies 25-204 (EEVLMNTKLE…FFKKCPAVSR (180 aa)). Intrachain disulfides connect Cys-69-Cys-186 and Cys-103-Cys-113. Fibronectin type-III domains lie at 326-434 (PPSA…TSRD) and 438-529 (PVSG…TLPD). A helical membrane pass occupies residues 542-562 (VLVAIGLLILIAVVIVAVFCF). Over 563-976 (RRSTRRRDPD…LRIHGGSLRY (414 aa)) the chain is Cytoplasmic. In terms of domain architecture, Protein kinase spans 613-897 (VKIEEVIGAG…IPDGPSHPLL (285 aa)). ATP is bound by residues 619–627 (IGAGEFGEV) and Lys-645. The Proton acceptor role is filled by Asp-738. Residues 906–970 (SHCSSVADWL…LSSVQTLRIH (65 aa)) form the SAM domain.

Belongs to the protein kinase superfamily. Tyr protein kinase family. Ephrin receptor subfamily.

It localises to the cell membrane. The enzyme catalyses L-tyrosyl-[protein] + ATP = O-phospho-L-tyrosyl-[protein] + ADP + H(+). Receptor tyrosine kinase which binds promiscuously transmembrane ephrin-B family ligands residing on adjacent cells, leading to contact-dependent bidirectional signaling into neighboring cells. The signaling pathway downstream of the receptor is referred to as forward signaling while the signaling pathway downstream of the ephrin ligand is referred to as reverse signaling. Together with its cognate ligand/functional ligand EFNB2 is involved in the regulation of cell adhesion and cell migration, and plays a central role in heart morphogenesis, angiogenesis and blood vessel remodeling and permeability. EPHB4-mediated forward signaling controls cellular repulsion and segregation from EFNB2-expressing cells. Involved in somitogenesis. The chain is Ephrin type-B receptor 4b from Danio rerio (Zebrafish).